A 492-amino-acid chain; its full sequence is Protein nucleotidyltransferase YdiU (492 aa).

Residues G90, G92, R93, K113, D125, G126, R176, and R183 each coordinate ATP. D252 (proton acceptor) is an active-site residue. Positions 253 and 262 each coordinate Mg(2+). ATP is bound at residue D262.

The protein belongs to the SELO family. Requires Mg(2+) as cofactor. The cofactor is Mn(2+).

It carries out the reaction L-seryl-[protein] + ATP = 3-O-(5'-adenylyl)-L-seryl-[protein] + diphosphate. The enzyme catalyses L-threonyl-[protein] + ATP = 3-O-(5'-adenylyl)-L-threonyl-[protein] + diphosphate. It catalyses the reaction L-tyrosyl-[protein] + ATP = O-(5'-adenylyl)-L-tyrosyl-[protein] + diphosphate. The catalysed reaction is L-histidyl-[protein] + UTP = N(tele)-(5'-uridylyl)-L-histidyl-[protein] + diphosphate. It carries out the reaction L-seryl-[protein] + UTP = O-(5'-uridylyl)-L-seryl-[protein] + diphosphate. The enzyme catalyses L-tyrosyl-[protein] + UTP = O-(5'-uridylyl)-L-tyrosyl-[protein] + diphosphate. In terms of biological role, nucleotidyltransferase involved in the post-translational modification of proteins. It can catalyze the addition of adenosine monophosphate (AMP) or uridine monophosphate (UMP) to a protein, resulting in modifications known as AMPylation and UMPylation. The chain is Protein nucleotidyltransferase YdiU from Thioalkalivibrio sulfidiphilus (strain HL-EbGR7).